The primary structure comprises 161 residues: ATP synthase subunit b 1 (161 aa).

A helical membrane pass occupies residues 3–23 (LDATFYALVGLILFFVLIAYL).

The protein belongs to the ATPase B chain family. In terms of assembly, F-type ATPases have 2 components, F(1) - the catalytic core - and F(0) - the membrane proton channel. F(1) has five subunits: alpha(3), beta(3), gamma(1), delta(1), epsilon(1). F(0) has three main subunits: a(1), b(2) and c(10-14). The alpha and beta chains form an alternating ring which encloses part of the gamma chain. F(1) is attached to F(0) by a central stalk formed by the gamma and epsilon chains, while a peripheral stalk is formed by the delta and b chains.

It is found in the cell inner membrane. Its function is as follows. F(1)F(0) ATP synthase produces ATP from ADP in the presence of a proton or sodium gradient. F-type ATPases consist of two structural domains, F(1) containing the extramembraneous catalytic core and F(0) containing the membrane proton channel, linked together by a central stalk and a peripheral stalk. During catalysis, ATP synthesis in the catalytic domain of F(1) is coupled via a rotary mechanism of the central stalk subunits to proton translocation. Functionally, component of the F(0) channel, it forms part of the peripheral stalk, linking F(1) to F(0). The sequence is that of ATP synthase subunit b 1 from Rhizobium meliloti (strain 1021) (Ensifer meliloti).